The following is a 157-amino-acid chain: MNYSITTLGKKTIAGFHLVGPWDQTVKQGVEQLMMWVENHQVPAREWLAVYYDNPEEVPAEKLRCATVVAVDEDYVIPANSEGVILAAVAGGDYACARARVVDYDFATPWMQFFDSLLQSTTYRVAPRPCFEIYLNDGNHDGYWDIDMYVPVERVAS.

This sequence belongs to the DNA gyrase inhibitor family. In terms of assembly, interacts with DNA gyrase.

The protein localises to the cytoplasm. Inhibits the supercoiling activity of DNA gyrase. Acts by inhibiting DNA gyrase at an early step, prior to (or at the step of) binding of DNA by the gyrase. It protects cells against toxins that target DNA gyrase, by inhibiting activity of these toxins and reducing the formation of lethal double-strand breaks in the cell. The protein is DNA gyrase inhibitor of Klebsiella pneumoniae (strain 342).